The primary structure comprises 577 residues: Proline--tRNA ligase (577 aa).

This sequence belongs to the class-II aminoacyl-tRNA synthetase family. ProS type 1 subfamily. Homodimer.

It is found in the cytoplasm. The catalysed reaction is tRNA(Pro) + L-proline + ATP = L-prolyl-tRNA(Pro) + AMP + diphosphate. Catalyzes the attachment of proline to tRNA(Pro) in a two-step reaction: proline is first activated by ATP to form Pro-AMP and then transferred to the acceptor end of tRNA(Pro). As ProRS can inadvertently accommodate and process non-cognate amino acids such as alanine and cysteine, to avoid such errors it has two additional distinct editing activities against alanine. One activity is designated as 'pretransfer' editing and involves the tRNA(Pro)-independent hydrolysis of activated Ala-AMP. The other activity is designated 'posttransfer' editing and involves deacylation of mischarged Ala-tRNA(Pro). The misacylated Cys-tRNA(Pro) is not edited by ProRS. The protein is Proline--tRNA ligase of Marinobacter nauticus (strain ATCC 700491 / DSM 11845 / VT8) (Marinobacter aquaeolei).